Here is a 371-residue protein sequence, read N- to C-terminus: Ferredoxin--NADP reductase, apicoplast (371 aa).

Residues 1-18 (MKIRFVFILSVLISGVCC) constitute an apicoplast transit peptide. FAD is bound by residues K68, 155–159 (ARLYS), 172–179 (AIKIHKYE), 192–194 (YCS), and T235. One can recognise an FAD-binding FR-type domain in the interval 68-218 (KNPLKCKIVD…TGAHGYFNLP (151 aa)). K174 serves as a coordination point for NADP(+). NADP(+) is bound by residues 272–273 (VY), S302, 313–315 (YVQ), and 341–343 (HKS). 2 residues coordinate FAD: K342 and Y371.

This sequence belongs to the ferredoxin--NADP reductase type 1 family. In terms of assembly, monomer. Homodimer; disulfide linked. NADP binding accelerates formation of an inactive, disulfide-linked homodimer when the protein is exposed to air for 24 hours or more (in vitro); the physiological relevance of this is uncertain. Requires FAD as cofactor.

Its subcellular location is the plastid. The protein localises to the apicoplast. The enzyme catalyses 2 reduced [2Fe-2S]-[ferredoxin] + NADP(+) + H(+) = 2 oxidized [2Fe-2S]-[ferredoxin] + NADPH. In terms of biological role, may play a role in the terminal step of the DOXP/MEP pathway for isoprenoid precursor biosynthesis. The polypeptide is Ferredoxin--NADP reductase, apicoplast (Plasmodium falciparum (isolate 3D7)).